Consider the following 231-residue polypeptide: Red fluorescent protein eqFP611 (231 aa).

Residues 63 to 65 (MYG) constitute a cross-link (2-iminomethyl-5-imidazolinone (Met-Gly)). Tyrosine 64 bears the (E)-2,3-didehydrotyrosine mark.

It belongs to the GFP family. As to quaternary structure, monomer. In terms of processing, contains a chromophore consisting of modified amino acid residues. The chromophore is formed by autocatalytic backbone condensation between Xaa-N and Gly-(N+2), oxidation of Tyr-(N+1) to didehydrotyrosine, and formation of a double bond to the alpha-amino nitrogen of residue Xaa-N. Maturation of the chromophore requires nothing other than molecular oxygen.

Its function is as follows. Pigment protein. The chain is Red fluorescent protein eqFP611 from Entacmaea quadricolor (Bubble-tip anemone).